The primary structure comprises 821 residues: MDLAAAAEPGAGSQHPEVRDEVAEKCQKLFLDFLEEFQGSDGEIKYLQFAEELIRPERNTLVVSFADLEQFNQQLSTTIQEEFYRVYPYLCRALKTFVKDRKEIPFAKDFYVAFQDLPTRHKIRELTSSRIGLLTRISGQVVRTHPVHPELVSGTFLCLDCQTVIKDVEQQFKYTQPNICRNPVCANRKRFLLDTNKSRFVDFQKVRIQETQAELPRGSIPRSLEVILRAEAVESAQAGDRCDFTGALIVVPDVSKLSTPGARAETNSRVSGADGYETEGIRGLRALGVRDLSYRLVFLACHVAPTNPRFGGKELRDEEQTAESIKNQMTVKEWEKVFEMSQDKNLYHNLCTSLFPTIHGNDEVKRGVLLMLFGGVPKTTGEGTSLRGDINVCIVGDPSTAKSQFLKHVDEFSPRAVYTSGKASSAAGLTAAVVRDEESHEFVIEAGALMLADNGVCCIDEFDKMDMRDQVAIHEAMEQQTISITKAGVKATLNARTSILAAANPVSGHYDRSKSLKQNINLSAPIMSRFDLFFILVDECNEVTDYAIARRIVDLHSRIEESIDRVYSLDDIRRYLLFARQFKPKISKESEDFIVEQYKRLRQRDGSGVTKSSWRITVRQLESMIRLSESMARMHCCDEVQPKHVKEAFRLLNKSIIRVETPDVNLDQEEEIQMETDEGQGGVNGHADSPAPVNRFNGSSEDASQETVSKPSLRLGFAEYCRISNLIVLHLRKMEEEEDESALKRSELVNWYLKEIESEIDSEEELINKKTIIEKVVHRLTHYDHVLIELTQAGLKGSSEGSESYEEDPYLVVNPNYLLED.

An N-acetylmethionine modification is found at Met-1. A phosphoserine mark is found at Ser-13, Ser-219, and Ser-271. Thr-278 carries the phosphothreonine modification. Positions 346-553 constitute an MCM domain; sequence LYHNLCTSLF…TDYAIARRIV (208 aa). Residues His-359, Ser-399, Thr-400, Ala-401, Lys-402, Ser-403, and Asn-504 each coordinate ATP. The Arginine finger signature appears at 528 to 531; the sequence is SRFD. The ADP site is built by Arg-619 and Glu-622. An N6-acetyllysine modification is found at Lys-643. A disordered region spans residues 676 to 708; sequence TDEGQGGVNGHADSPAPVNRFNGSSEDASQETV. 3 positions are modified to phosphoserine: Ser-689, Ser-704, and Ser-762. Over residues 696 to 708 the composition is skewed to polar residues; sequence FNGSSEDASQETV. Thr-791 bears the Phosphothreonine mark.

It belongs to the MCM family. Component of the MCM2-7 complex. The complex forms a toroidal hexameric ring with the proposed subunit order MCM2-MCM6-MCM4-MCM7-MCM3-MCM5. Component of the CMG helicase complex, a hexameric ring of related MCM2-7 subunits stabilized by CDC45 and the tetrameric GINS complex. May interact with MCM10. Interacts with TIPIN. Interacts with CDT1. Interacts with MCMBP. Interacts with DDI2. O-glycosylated (O-GlcNAcylated), in a cell cycle-dependent manner.

It localises to the nucleus. Its subcellular location is the chromosome. It carries out the reaction ATP + H2O = ADP + phosphate + H(+). Acts as a component of the MCM2-7 complex (MCM complex) which is the replicative helicase essential for 'once per cell cycle' DNA replication initiation and elongation in eukaryotic cells. Core component of CDC45-MCM-GINS (CMG) helicase, the molecular machine that unwinds template DNA during replication, and around which the replisome is built. The active ATPase sites in the MCM2-7 ring are formed through the interaction surfaces of two neighboring subunits such that a critical structure of a conserved arginine finger motif is provided in trans relative to the ATP-binding site of the Walker A box of the adjacent subunit. The six ATPase active sites, however, are likely to contribute differentially to the complex helicase activity. In Mus musculus (Mouse), this protein is DNA replication licensing factor MCM6 (Mcm6).